Here is a 493-residue protein sequence, read N- to C-terminus: Cytochrome P450 2E1 (493 aa).

298-303 (FAGTET) is a binding site for substrate. Cysteine 437 lines the heme pocket.

Belongs to the cytochrome P450 family. In terms of assembly, interacts with chaperones HSP70 and HSP90; this interaction is required for initial targeting to mitochondria. The cofactor is heme.

It is found in the endoplasmic reticulum membrane. It localises to the microsome membrane. Its subcellular location is the mitochondrion inner membrane. The catalysed reaction is an organic molecule + reduced [NADPH--hemoprotein reductase] + O2 = an alcohol + oxidized [NADPH--hemoprotein reductase] + H2O + H(+). The enzyme catalyses (5Z,8Z,11Z)-eicosatrienoate + reduced [NADPH--hemoprotein reductase] + O2 = 19-hydroxy-(5Z,8Z,11Z)-eicosatrienoate + oxidized [NADPH--hemoprotein reductase] + H2O + H(+). It carries out the reaction (5Z,8Z,11Z,14Z,17Z)-eicosapentaenoate + reduced [NADPH--hemoprotein reductase] + O2 = 19-hydroxy-(5Z,8Z,11Z,14Z,17Z)-eicosapentaenoate + oxidized [NADPH--hemoprotein reductase] + H2O + H(+). It catalyses the reaction (4Z,7Z,10Z,13Z,16Z,19Z)-docosahexaenoate + reduced [NADPH--hemoprotein reductase] + O2 = 21-hydroxy-(4Z,7Z,10Z,13Z,16Z,19Z)-docosahexaenoate + oxidized [NADPH--hemoprotein reductase] + H2O + H(+). The catalysed reaction is dodecanoate + reduced [NADPH--hemoprotein reductase] + O2 = 11-hydroxydodecanoate + oxidized [NADPH--hemoprotein reductase] + H2O + H(+). The enzyme catalyses tetradecanoate + reduced [NADPH--hemoprotein reductase] + O2 = 13-hydroxytetradecanoate + oxidized [NADPH--hemoprotein reductase] + H2O + H(+). It carries out the reaction 4-nitrophenol + NADPH + O2 + H(+) = 4-nitrocatechol + NADP(+) + H2O. Its pathway is lipid metabolism; fatty acid metabolism. With respect to regulation, the omega-1 hydroxylase activity is stimulated by cytochrome b5. In terms of biological role, a cytochrome P450 monooxygenase involved in the metabolism of fatty acids. Mechanistically, uses molecular oxygen inserting one oxygen atom into a substrate, and reducing the second into a water molecule, with two electrons provided by NADPH via cytochrome P450 reductase (NADPH--hemoprotein reductase). Catalyzes the hydroxylation of carbon-hydrogen bonds. Hydroxylates fatty acids specifically at the omega-1 position displaying the highest catalytic activity for saturated fatty acids. May be involved in the oxidative metabolism of xenobiotics. The polypeptide is Cytochrome P450 2E1 (CYP2E1) (Oryctolagus cuniculus (Rabbit)).